Reading from the N-terminus, the 85-residue chain is UPF0291 protein SpyM3_1470 (85 aa).

Residues 62 to 85 (TPEKLRQVQREKGLHGRSLDDPKS) are disordered.

This sequence belongs to the UPF0291 family.

The protein resides in the cytoplasm. This is UPF0291 protein SpyM3_1470 from Streptococcus pyogenes serotype M3 (strain ATCC BAA-595 / MGAS315).